Here is a 430-residue protein sequence, read N- to C-terminus: Glutamate-1-semialdehyde 2,1-aminomutase (430 aa).

Lys265 is modified (N6-(pyridoxal phosphate)lysine).

It belongs to the class-III pyridoxal-phosphate-dependent aminotransferase family. HemL subfamily. Pyridoxal 5'-phosphate serves as cofactor.

The protein localises to the cytoplasm. It catalyses the reaction (S)-4-amino-5-oxopentanoate = 5-aminolevulinate. Its pathway is porphyrin-containing compound metabolism; protoporphyrin-IX biosynthesis; 5-aminolevulinate from L-glutamyl-tRNA(Glu): step 2/2. This is Glutamate-1-semialdehyde 2,1-aminomutase from Caldivirga maquilingensis (strain ATCC 700844 / DSM 13496 / JCM 10307 / IC-167).